Reading from the N-terminus, the 50-residue chain is Photosystem I reaction center subunit IX (50 aa).

The helical transmembrane segment at 7 to 27 threads the bilayer; that stretch reads YLSTAPVLAILCCSFLAGLVI.

This sequence belongs to the PsaJ family.

Its subcellular location is the plastid. It is found in the chloroplast thylakoid membrane. Its function is as follows. May help in the organization of the PsaE and PsaF subunits. This is Photosystem I reaction center subunit IX from Pinus koraiensis (Korean pine).